The primary structure comprises 29 residues: MFKMKFGDTLPRSDFGTGGNKQAPGLELG.

The disordered stretch occupies residues 1-29; it reads MFKMKFGDTLPRSDFGTGGNKQAPGLELG.

This is an uncharacterized protein from Saccharomyces cerevisiae (strain ATCC 204508 / S288c) (Baker's yeast).